The primary structure comprises 155 residues: Ribosomal RNA large subunit methyltransferase H (155 aa).

S-adenosyl-L-methionine is bound by residues Leu-72, Gly-103, and 122 to 127 (LSDLTL).

This sequence belongs to the RNA methyltransferase RlmH family. As to quaternary structure, homodimer.

It localises to the cytoplasm. It catalyses the reaction pseudouridine(1915) in 23S rRNA + S-adenosyl-L-methionine = N(3)-methylpseudouridine(1915) in 23S rRNA + S-adenosyl-L-homocysteine + H(+). In terms of biological role, specifically methylates the pseudouridine at position 1915 (m3Psi1915) in 23S rRNA. The protein is Ribosomal RNA large subunit methyltransferase H of Acidovorax sp. (strain JS42).